Reading from the N-terminus, the 388-residue chain is tRNA (guanine-N(7)-)-methyltransferase (388 aa).

3 residues coordinate S-adenosyl-L-methionine: E129, E154, and D181. Substrate is bound by residues K207 and D237.

Belongs to the class I-like SAM-binding methyltransferase superfamily. TrmB family.

It catalyses the reaction guanosine(46) in tRNA + S-adenosyl-L-methionine = N(7)-methylguanosine(46) in tRNA + S-adenosyl-L-homocysteine. It functions in the pathway tRNA modification; N(7)-methylguanine-tRNA biosynthesis. In terms of biological role, catalyzes the formation of N(7)-methylguanine at position 46 (m7G46) in tRNA. The polypeptide is tRNA (guanine-N(7)-)-methyltransferase (Wolinella succinogenes (strain ATCC 29543 / DSM 1740 / CCUG 13145 / JCM 31913 / LMG 7466 / NCTC 11488 / FDC 602W) (Vibrio succinogenes)).